The chain runs to 560 residues: Arginine--tRNA ligase (560 aa).

A 'HIGH' region motif is present at residues 135–145; that stretch reads ANPTGLLHMGN.

It belongs to the class-I aminoacyl-tRNA synthetase family. In terms of assembly, monomer.

It is found in the cytoplasm. The enzyme catalyses tRNA(Arg) + L-arginine + ATP = L-arginyl-tRNA(Arg) + AMP + diphosphate. This Moorella thermoacetica (strain ATCC 39073 / JCM 9320) protein is Arginine--tRNA ligase.